We begin with the raw amino-acid sequence, 66 residues long: Large ribosomal subunit protein bL33c (66 aa).

The protein belongs to the bacterial ribosomal protein bL33 family.

It localises to the plastid. It is found in the chloroplast. The chain is Large ribosomal subunit protein bL33c from Cucumis sativus (Cucumber).